Reading from the N-terminus, the 579-residue chain is Glutamate--tRNA ligase (579 aa).

The 'HIGH' region signature appears at 114-124 (PNPNGPWHIGH).

It belongs to the class-I aminoacyl-tRNA synthetase family. Glutamate--tRNA ligase type 2 subfamily.

Its subcellular location is the cytoplasm. The enzyme catalyses tRNA(Glu) + L-glutamate + ATP = L-glutamyl-tRNA(Glu) + AMP + diphosphate. Functionally, catalyzes the attachment of glutamate to tRNA(Glu) in a two-step reaction: glutamate is first activated by ATP to form Glu-AMP and then transferred to the acceptor end of tRNA(Glu). This Haloarcula marismortui (strain ATCC 43049 / DSM 3752 / JCM 8966 / VKM B-1809) (Halobacterium marismortui) protein is Glutamate--tRNA ligase.